Reading from the N-terminus, the 255-residue chain is uncharacterized protein (255 aa).

Residues 4–72 form the J domain; sequence DPYSVLGVEK…KRRKHYDKTG (69 aa). Composition is skewed to basic residues over residues 167-178 and 243-255; these read FAPNEKKRKRRA and TKPK…RSKE. Disordered stretches follow at residues 167–215 and 230–255; these read FAPN…EEAL and LISN…RSKE.

It belongs to the DnaJ family.

It is found in the nucleus. Its subcellular location is the nucleolus. This is an uncharacterized protein from Schizosaccharomyces pombe (strain 972 / ATCC 24843) (Fission yeast).